A 140-amino-acid polypeptide reads, in one-letter code: Transcription antitermination protein NusB (140 aa).

It belongs to the NusB family.

Involved in transcription antitermination. Required for transcription of ribosomal RNA (rRNA) genes. Binds specifically to the boxA antiterminator sequence of the ribosomal RNA (rrn) operons. This is Transcription antitermination protein NusB from Alteromonas mediterranea (strain DSM 17117 / CIP 110805 / LMG 28347 / Deep ecotype).